A 258-amino-acid chain; its full sequence is Small ribosomal subunit protein uS2 (258 aa).

The disordered stretch occupies residues 222–258; that stretch reads GKALRDQDEAEQVEPVSQEEKDEVVAEAMSEADFEEQ.

It belongs to the universal ribosomal protein uS2 family.

In Campylobacter fetus subsp. fetus (strain 82-40), this protein is Small ribosomal subunit protein uS2.